Consider the following 255-residue polypeptide: Triosephosphate isomerase (255 aa).

9-11 (NWK) provides a ligand contact to substrate. His-100 (electrophile) is an active-site residue. The active-site Proton acceptor is Glu-169. Residues Gly-175, Ser-208, and 229-230 (GG) contribute to the substrate site.

It belongs to the triosephosphate isomerase family. In terms of assembly, homodimer.

Its subcellular location is the cytoplasm. It carries out the reaction D-glyceraldehyde 3-phosphate = dihydroxyacetone phosphate. The protein operates within carbohydrate biosynthesis; gluconeogenesis. It participates in carbohydrate degradation; glycolysis; D-glyceraldehyde 3-phosphate from glycerone phosphate: step 1/1. In terms of biological role, involved in the gluconeogenesis. Catalyzes stereospecifically the conversion of dihydroxyacetone phosphate (DHAP) to D-glyceraldehyde-3-phosphate (G3P). This Synechococcus sp. (strain JA-3-3Ab) (Cyanobacteria bacterium Yellowstone A-Prime) protein is Triosephosphate isomerase.